The following is a 193-amino-acid chain: Protein GrpE (193 aa).

A disordered region spans residues 1–40; sequence MTEENRPQPDQPELTVTSESSVQETGENKARTPEQEGEAM. Polar residues predominate over residues 14-25; the sequence is LTVTSESSVQET.

Belongs to the GrpE family. Homodimer.

The protein localises to the cytoplasm. In terms of biological role, participates actively in the response to hyperosmotic and heat shock by preventing the aggregation of stress-denatured proteins, in association with DnaK and GrpE. It is the nucleotide exchange factor for DnaK and may function as a thermosensor. Unfolded proteins bind initially to DnaJ; upon interaction with the DnaJ-bound protein, DnaK hydrolyzes its bound ATP, resulting in the formation of a stable complex. GrpE releases ADP from DnaK; ATP binding to DnaK triggers the release of the substrate protein, thus completing the reaction cycle. Several rounds of ATP-dependent interactions between DnaJ, DnaK and GrpE are required for fully efficient folding. This Nitrosospira multiformis (strain ATCC 25196 / NCIMB 11849 / C 71) protein is Protein GrpE.